A 116-amino-acid polypeptide reads, in one-letter code: NADH-ubiquinone oxidoreductase chain 3 (116 aa).

A run of 3 helical transmembrane segments spans residues 3–23 (LITTIITITITLSAVLATVSF), 56–76 (FFLIAILFLLFDLEIALLLPL), and 87–107 (LTLVWSTAVLALLTLGLIYEW).

It belongs to the complex I subunit 3 family.

The protein resides in the mitochondrion membrane. It carries out the reaction a ubiquinone + NADH + 5 H(+)(in) = a ubiquinol + NAD(+) + 4 H(+)(out). Its function is as follows. Core subunit of the mitochondrial membrane respiratory chain NADH dehydrogenase (Complex I) that is believed to belong to the minimal assembly required for catalysis. Complex I functions in the transfer of electrons from NADH to the respiratory chain. The immediate electron acceptor for the enzyme is believed to be ubiquinone. This is NADH-ubiquinone oxidoreductase chain 3 (MT-ND3) from Oncorhynchus kisutch (Coho salmon).